A 340-amino-acid polypeptide reads, in one-letter code: UDP-3-O-acylglucosamine N-acyltransferase (340 aa).

His240 (proton acceptor) is an active-site residue.

It belongs to the transferase hexapeptide repeat family. LpxD subfamily. As to quaternary structure, homotrimer.

It carries out the reaction a UDP-3-O-[(3R)-3-hydroxyacyl]-alpha-D-glucosamine + a (3R)-hydroxyacyl-[ACP] = a UDP-2-N,3-O-bis[(3R)-3-hydroxyacyl]-alpha-D-glucosamine + holo-[ACP] + H(+). Its pathway is bacterial outer membrane biogenesis; LPS lipid A biosynthesis. Catalyzes the N-acylation of UDP-3-O-acylglucosamine using 3-hydroxyacyl-ACP as the acyl donor. Is involved in the biosynthesis of lipid A, a phosphorylated glycolipid that anchors the lipopolysaccharide to the outer membrane of the cell. The sequence is that of UDP-3-O-acylglucosamine N-acyltransferase from Pseudoalteromonas translucida (strain TAC 125).